The chain runs to 476 residues: Ataxin-10 (476 aa).

Omega-N-methylarginine is present on arginine 10. Phosphoserine is present on residues serine 13 and serine 78. Threonine 83 carries the phosphothreonine modification. Serine 431 carries the post-translational modification Phosphoserine.

It belongs to the ataxin-10 family. Homooligomer. Interacts with GNB2. Interacts with IQCB1. Interacts with OGT. Polyubiquitinated. In terms of processing, phosphorylation at Ser-13 by AURKB promotes the association of ATXN10 with PLK1. Phosphorylation at Ser-78 and Thr-83 by PLK1 may play a role in the regulation of cytokinesis and may stimulate the proteasome-mediated degradation of ATXN10.

Its subcellular location is the cytoplasm. The protein localises to the perinuclear region. The protein resides in the midbody. It localises to the cytoskeleton. It is found in the cilium basal body. Its subcellular location is the microtubule organizing center. The protein localises to the centrosome. The protein resides in the centriole. In terms of biological role, may play a role in the regulation of cytokinesis. May play a role in signaling by stimulating protein glycosylation. Induces neuritogenesis by activating the Ras-MAP kinase pathway and is necessary for the survival of cerebellar neurons. Does not appear to play a major role in ciliogenesis. This Pongo abelii (Sumatran orangutan) protein is Ataxin-10 (ATXN10).